Consider the following 247-residue polypeptide: Protein NipSnap homolog 3B (247 aa).

N6-succinyllysine occurs at positions 45, 48, 57, and 166.

The protein belongs to the NipSnap family.

It localises to the cytoplasm. The protein localises to the cytosol. The sequence is that of Protein NipSnap homolog 3B (Nipsnap3b) from Mus musculus (Mouse).